The following is a 374-amino-acid chain: uncharacterized protein (374 aa).

Residues 1–23 form the signal peptide; sequence MDSKWFFIVLISFLLVLPSIVTP. The tract at residues 66–374 is disordered; the sequence is SSSSSSSSSS…SSSSSSSGEN (309 aa).

The protein localises to the secreted. This is an uncharacterized protein from Dictyostelium discoideum (Social amoeba).